The chain runs to 233 residues: 5'-methylthioadenosine/S-adenosylhomocysteine nucleosidase (233 aa).

Glu-12 functions as the Proton acceptor in the catalytic mechanism. Substrate contacts are provided by residues Gly-78, Ile-156, and 177 to 178 (ME). Catalysis depends on Asp-201, which acts as the Proton donor.

Belongs to the PNP/UDP phosphorylase family. MtnN subfamily.

The catalysed reaction is S-adenosyl-L-homocysteine + H2O = S-(5-deoxy-D-ribos-5-yl)-L-homocysteine + adenine. The enzyme catalyses S-methyl-5'-thioadenosine + H2O = 5-(methylsulfanyl)-D-ribose + adenine. It catalyses the reaction 5'-deoxyadenosine + H2O = 5-deoxy-D-ribose + adenine. The protein operates within amino-acid biosynthesis; L-methionine biosynthesis via salvage pathway; S-methyl-5-thio-alpha-D-ribose 1-phosphate from S-methyl-5'-thioadenosine (hydrolase route): step 1/2. Functionally, catalyzes the irreversible cleavage of the glycosidic bond in both 5'-methylthioadenosine (MTA) and S-adenosylhomocysteine (SAH/AdoHcy) to adenine and the corresponding thioribose, 5'-methylthioribose and S-ribosylhomocysteine, respectively. Also cleaves 5'-deoxyadenosine, a toxic by-product of radical S-adenosylmethionine (SAM) enzymes, into 5-deoxyribose and adenine. The chain is 5'-methylthioadenosine/S-adenosylhomocysteine nucleosidase from Listeria monocytogenes serotype 4b (strain CLIP80459).